The chain runs to 119 residues: Large ribosomal subunit protein uL18 (119 aa).

This sequence belongs to the universal ribosomal protein uL18 family. Part of the 50S ribosomal subunit; part of the 5S rRNA/L5/L18/L25 subcomplex. Contacts the 5S and 23S rRNAs.

This is one of the proteins that bind and probably mediate the attachment of the 5S RNA into the large ribosomal subunit, where it forms part of the central protuberance. The polypeptide is Large ribosomal subunit protein uL18 (Borreliella afzelii (strain PKo) (Borrelia afzelii)).